Consider the following 320-residue polypeptide: Nod factor export ATP-binding protein I (320 aa).

An ABC transporter domain is found at 15-245; sequence VSATGVWKKR…LGALKILEID (231 aa). 47–54 contributes to the ATP binding site; that stretch reads GTNGAGKS.

Belongs to the ABC transporter superfamily. Lipooligosaccharide exporter (TC 3.A.1.102) family. As to quaternary structure, the complex is composed of two ATP-binding proteins (NodI) and two transmembrane proteins (NodJ).

The protein localises to the cell inner membrane. In terms of biological role, part of the ABC transporter complex NodIJ involved in the export of the nodulation factors (Nod factors), the bacterial signal molecules that induce symbiosis and subsequent nodulation induction. Nod factors are LCO (lipo-chitin oligosaccharide), a modified beta-1,4-linked N-acetylglucosamine oligosaccharide. This subunit is responsible for energy coupling to the transport system. This Azorhizobium caulinodans (strain ATCC 43989 / DSM 5975 / JCM 20966 / LMG 6465 / NBRC 14845 / NCIMB 13405 / ORS 571) protein is Nod factor export ATP-binding protein I.